Reading from the N-terminus, the 195-residue chain is Phosphoheptose isomerase (195 aa).

The SIS domain maps to 36–195; it reads VSKVLQSGNT…IVEYNLFKME (160 aa). 51 to 53 lines the substrate pocket; sequence NGG. Residues H60 and E64 each contribute to the Zn(2+) site. Substrate contacts are provided by residues E64, 95–96, 121–123, S126, and Q173; these read ND and STS. 2 residues coordinate Zn(2+): Q173 and H181.

It belongs to the SIS family. GmhA subfamily. Requires Zn(2+) as cofactor.

The protein localises to the cytoplasm. The enzyme catalyses 2 D-sedoheptulose 7-phosphate = D-glycero-alpha-D-manno-heptose 7-phosphate + D-glycero-beta-D-manno-heptose 7-phosphate. It functions in the pathway carbohydrate biosynthesis; D-glycero-D-manno-heptose 7-phosphate biosynthesis; D-glycero-alpha-D-manno-heptose 7-phosphate and D-glycero-beta-D-manno-heptose 7-phosphate from sedoheptulose 7-phosphate: step 1/1. Functionally, catalyzes the isomerization of sedoheptulose 7-phosphate in D-glycero-D-manno-heptose 7-phosphate. The polypeptide is Phosphoheptose isomerase (Leptospira borgpetersenii serovar Hardjo-bovis (strain JB197)).